The following is an 89-amino-acid chain: UPF0367 protein MAE_19160 (89 aa).

It belongs to the UPF0367 family.

This is UPF0367 protein MAE_19160 from Microcystis aeruginosa (strain NIES-843 / IAM M-2473).